Reading from the N-terminus, the 471-residue chain is Argininosuccinate lyase (471 aa).

It belongs to the lyase 1 family. Argininosuccinate lyase subfamily.

Its subcellular location is the cytoplasm. It catalyses the reaction 2-(N(omega)-L-arginino)succinate = fumarate + L-arginine. The protein operates within amino-acid biosynthesis; L-arginine biosynthesis; L-arginine from L-ornithine and carbamoyl phosphate: step 3/3. This Paramagnetospirillum magneticum (strain ATCC 700264 / AMB-1) (Magnetospirillum magneticum) protein is Argininosuccinate lyase.